A 561-amino-acid polypeptide reads, in one-letter code: Oxygen-dependent choline dehydrogenase (561 aa).

FAD is bound at residue 6–35 (DYIIIGAGSAGNVLATRLTEDADVSVLLLE). Histidine 475 acts as the Proton acceptor in catalysis.

This sequence belongs to the GMC oxidoreductase family. FAD is required as a cofactor.

It carries out the reaction choline + A = betaine aldehyde + AH2. The enzyme catalyses betaine aldehyde + NAD(+) + H2O = glycine betaine + NADH + 2 H(+). It participates in amine and polyamine biosynthesis; betaine biosynthesis via choline pathway; betaine aldehyde from choline (cytochrome c reductase route): step 1/1. Involved in the biosynthesis of the osmoprotectant glycine betaine. Catalyzes the oxidation of choline to betaine aldehyde and betaine aldehyde to glycine betaine at the same rate. This Pseudomonas aeruginosa (strain LESB58) protein is Oxygen-dependent choline dehydrogenase.